Reading from the N-terminus, the 160-residue chain is Cytochrome b6-f complex subunit 4 (160 aa).

3 helical membrane-spanning segments follow: residues 36-56 (LLYIFPIVILGTIACIAGLAV), 95-115 (LLGVLLMASVPAGLLTVPFLE), and 131-151 (TVFLIGTVVAIWLGIGAALPI).

The protein belongs to the cytochrome b family. PetD subfamily. As to quaternary structure, the 4 large subunits of the cytochrome b6-f complex are cytochrome b6, subunit IV (17 kDa polypeptide, petD), cytochrome f and the Rieske protein, while the 4 small subunits are petG, petL, petM and petN. The complex functions as a dimer.

The protein resides in the plastid. The protein localises to the chloroplast thylakoid membrane. Component of the cytochrome b6-f complex, which mediates electron transfer between photosystem II (PSII) and photosystem I (PSI), cyclic electron flow around PSI, and state transitions. This Psilotum nudum (Whisk fern) protein is Cytochrome b6-f complex subunit 4.